A 329-amino-acid chain; its full sequence is Dolichyl-diphosphooligosaccharide--protein glycosyltransferase subunit MAGT1 (329 aa).

Residues 1–23 form the signal peptide; it reads MAGLKGLLFGGILFAMCGGLSEG. Topologically, residues 24–178 are extracellular; it reads QKKKEMVLSD…DVNIRVIRPP (155 aa). Positions 41-169 constitute a Thioredoxin domain; it reads WASKRPVIRM…LARWVADRTD (129 aa). The N-linked (GlcNAc...) asparagine glycan is linked to asparagine 65. Residues cysteine 81 and cysteine 84 are joined by a disulfide bond. Residues 179–199 traverse the membrane as a helical segment; that stretch reads NYAGPLMLGLLLAVIGGLVYL. The Cytoplasmic segment spans residues 200–212; sequence RRSNLDFLNNKTG. A helical membrane pass occupies residues 213-233; sequence WALAALCFVLAMTSGQMWNHI. The Extracellular segment spans residues 234-258; it reads RGPPYAHKNPHTNQVNYIHGSSQAQ. Residues 259 to 279 traverse the membrane as a helical segment; sequence FVAETHIVLLFNGAVTLGMVL. Over 280-294 the chain is Cytoplasmic; that stretch reads LHEAATSDLDVGKRK. The helical transmembrane segment at 295–315 threads the bilayer; that stretch reads IMCIAGITLVVIFFSWLLSVF. Over 316-329 the chain is Extracellular; that stretch reads RSKYHGYPYSFLMT.

Belongs to the OST3/OST6 family. In terms of assembly, accessory component of the STT3B-containing form of the oligosaccharyltransferase (OST) complex.

It localises to the cell membrane. The protein resides in the endoplasmic reticulum. The protein localises to the endoplasmic reticulum membrane. It participates in protein modification; protein glycosylation. In terms of biological role, accessory component of the STT3B-containing form of the N-oligosaccharyl transferase (OST) complex which catalyzes the transfer of a high mannose oligosaccharide from a lipid-linked oligosaccharide donor to an asparagine residue within an Asn-X-Ser/Thr consensus motif in nascent polypeptide chains. May be involved in substrate-specific N-glycosylation involving acceptor sites that are near cysteine residues. Could indirectly play a role in Mg(2+) transport in epithelial cells. This Xenopus laevis (African clawed frog) protein is Dolichyl-diphosphooligosaccharide--protein glycosyltransferase subunit MAGT1.